The following is a 494-amino-acid chain: BTB/POZ domain and ankyrin repeat-containing protein NH5.2 (494 aa).

The region spanning 25–131 (SDVAFSVEGR…LYSGQASVAA (107 aa)) is the BTB domain. The tract at residues 60-95 (NHQPPPPPPPPLNWPTAGGGGGGSGGGGRGGAGGGG) is disordered. Pro residues predominate over residues 61-72 (HQPPPPPPPPLN). The span at 76-95 (AGGGGGGSGGGGRGGAGGGG) shows a compositional bias: gly residues. A C2HC NPR-type zinc finger spans residues 137 to 151 (LPGCGARGCWHTRCG). C140, C145, H147, and C150 together coordinate Zn(2+). ANK repeat units lie at residues 275–303 (NKIR…GLDL), 304–334 (DDAL…DVNS), 339–368 (TGKT…DPNS), and 372–406 (DGVT…KLRL). Disordered regions lie at residues 421–443 (DDGA…PRSD) and 471–494 (GEGR…NGFA).

This sequence belongs to the plant 'ANKYRIN-BTB/POZ' family. 'NOOT-BOP-COCH-like' (NBCL) subfamily. In terms of assembly, homodimer. Interacts with TGAL5, TGAL7, TGAL8 and TGAL9.

It localises to the nucleus. The protein resides in the cytoplasm. The protein operates within protein modification; protein ubiquitination. May act as a substrate-specific adapter of an E3 ubiquitin-protein ligase complex (CUL3-RBX1-BTB) which mediates the ubiquitination and subsequent proteasomal degradation of target proteins. Transcriptional co-regulator involved in the promotion of leaf and floral meristem fate and determinacy. Required for the abscission of senescent organs, probably by regulating the cell wall disorganization in abscission zones (AZs, e.g. pulvini at the base of leaves). In Oryza sativa subsp. japonica (Rice), this protein is BTB/POZ domain and ankyrin repeat-containing protein NH5.2.